We begin with the raw amino-acid sequence, 76 residues long: MQTAYWVMVMMMVWIAAPLSEGGKLNDVIRGLVPDDITPQLILGSLISRRQSEEGGSNATKKPYILRASDQVASGP.

The N-terminal stretch at 1-22 (MQTAYWVMVMMMVWIAAPLSEG) is a signal peptide. The propeptide occupies 23 to 50 (GKLNDVIRGLVPDDITPQLILGSLISRR). Gln51 bears the Pyrrolidone carboxylic acid mark. The tract at residues 51-76 (QSEEGGSNATKKPYILRASDQVASGP) is disordered. Thr60 carries an O-linked (GalNAc...) threonine glycan. Positions 67 to 76 (RASDQVASGP) are excised as a propeptide.

This sequence belongs to the conotoxin C superfamily. O-glycosylated. The glycosylation seems to enhance the affinity to the neurotensin receptors. In terms of tissue distribution, expressed by the venom duct.

The protein localises to the secreted. Functionally, acts as an agonist of neurotensin receptors. It binds to human neurotensin type 1 receptor (NTSR1), rat neurotensin types 1 and 2 receptors (NTSR1/NTSR2) and mouse neurotensin type 3 receptor (SORT1). In Conus geographus (Geography cone), this protein is Contulakin-G.